The primary structure comprises 180 residues: ATP-dependent protease subunit HslV (180 aa).

Threonine 6 is a catalytic residue. 3 residues coordinate Na(+): alanine 164, cysteine 167, and threonine 170.

The protein belongs to the peptidase T1B family. HslV subfamily. A double ring-shaped homohexamer of HslV is capped on each side by a ring-shaped HslU homohexamer. The assembly of the HslU/HslV complex is dependent on binding of ATP.

The protein resides in the cytoplasm. The catalysed reaction is ATP-dependent cleavage of peptide bonds with broad specificity.. Its activity is regulated as follows. Allosterically activated by HslU binding. Its function is as follows. Protease subunit of a proteasome-like degradation complex believed to be a general protein degrading machinery. The polypeptide is ATP-dependent protease subunit HslV (Borrelia turicatae (strain 91E135)).